We begin with the raw amino-acid sequence, 510 residues long: Cytochrome P450 monooxygenase btcC (510 aa).

A helical membrane pass occupies residues 1-21; the sequence is MSFPGVIFVVSFFPLLMGIAV. Residue C446 coordinates heme.

Belongs to the cytochrome P450 family. Requires heme as cofactor.

It localises to the membrane. The protein operates within secondary metabolite biosynthesis; terpenoid biosynthesis. Functionally, cytochrome P450 monooxygenase; part of the gene cluster that mediates the biosynthesis of betaestacins. The bifunctional terpene synthase btcA converts isopentenyl diphosphate (IPP) and dimethylallyl diphosphate (DMAPP) into the sesterterpene betaestacin I. The C-terminal prenyltransferase (PT) domain of btcA catalyzes formation of GFPP, whereas the N-terminal terpene cyclase (TC) domain catalyzes the cyclization of GFPP into betaestacin I. The cytochrome P450 monooxygenase btcB is then responsible for the six-step oxidation of betaestacin I to yield betaestacin II. The roles of the cytochrome P450 monooxygenase btcC and the alpha-ketoglutarate-dependent dioxygenase btcD have not been identified yet. The chain is Cytochrome P450 monooxygenase btcC from Neocamarosporium betae (Beet black rot fungus).